The following is a 657-amino-acid chain: Forkhead box protein O3 (657 aa).

Disordered regions lie at residues 1–71 and 216–320; these read MAEA…EGAA and SSWW…ELDD. Positions 142–236 form a DNA-binding region, fork-head; the sequence is WGNMSYADLI…KGGKAPRRRA (95 aa). Positions 246–257 are enriched in basic residues; sequence TKSRGRAAKKKA. Residues 268–283 show a composition bias toward polar residues; sequence DSPSQLSKWPGSPTSR. The span at 284-296 shows a compositional bias: basic and acidic residues; the sequence is SSDKLDTWTDFRS. Residues 297–307 are compositionally biased toward polar residues; the sequence is RTNSNASTISG.

Post-translationally, dephosphorylation may promote translocation to the nucleus where the protein induces transcription of target genes and triggers apoptosis. In terms of tissue distribution, localized to the animal hemisphere during early cleavage stages. At the late neurula, localized in the anterior neural plate, neural crest cells and in the hatching gland. As development progresses, expression becomes less localized, being observed in a variety of organs and tissues including the head, branchial arches and somites by stage 32.

Its subcellular location is the cytoplasm. It localises to the cytosol. The protein localises to the nucleus. Functionally, transcriptional activator that recognizes and binds to the DNA sequence 5'-[AG]TAAA[TC]A-3' and regulates different processes, such as apoptosis and autophagy. Acts as a positive regulator of autophagy in skeletal muscle: in starved cells, enters the nucleus following dephosphorylation and binds the promoters of autophagy genes, thereby activating their expression, resulting in proteolysis of skeletal muscle proteins. Triggers apoptosis in the absence of survival factors, including neuronal cell death upon oxidative stress. In response to metabolic stress, translocates into the mitochondria where it promotes mtDNA transcription. Also acts as a key regulator of chondrogenic commitment of skeletal progenitor cells in response to lipid availability: when lipids levels are low, translocates to the nucleus and promotes expression of sox9, which induces chondrogenic commitment and suppresses fatty acid oxidation. Also acts as a key regulator of regulatory T-cells (Treg) differentiation. This Xenopus laevis (African clawed frog) protein is Forkhead box protein O3.